The chain runs to 260 residues: Crotonyl-CoA hydratase (260 aa).

Glu-114 acts as the Nucleophile in catalysis. Glu-134 (proton acceptor) is an active-site residue.

Belongs to the enoyl-CoA hydratase/isomerase family. Homotetramer.

The protein resides in the cytoplasm. The enzyme catalyses 3-hydroxybutanoyl-CoA = (2E)-butenoyl-CoA + H2O. It catalyses the reaction a short-chain (3S)-3-hydroxyacyl-CoA = a short-chain (2E)-enoyl-CoA + H2O. It functions in the pathway lipid metabolism; butanoate metabolism. Involved in syntrophic growth of S.wolfei with butyrate, as part of the butyrate oxidation pathway. Probably catalyzes the hydration of crotonyl-CoA to 3-hydroxybutyryl-CoA. The polypeptide is Crotonyl-CoA hydratase (Syntrophomonas wolfei subsp. wolfei (strain DSM 2245B / Goettingen)).